The primary structure comprises 257 residues: Small ribosomal subunit protein eS1 (257 aa).

The interval 236 to 257 (TSAEGEKIERPDDYEPPVQESV) is disordered. Positions 239 to 248 (EGEKIERPDD) are enriched in basic and acidic residues.

This sequence belongs to the eukaryotic ribosomal protein eS1 family. In terms of assembly, component of the small ribosomal subunit. Mature ribosomes consist of a small (40S) and a large (60S) subunit. The 40S subunit contains about 33 different proteins and 1 molecule of RNA (18S). The 60S subunit contains about 49 different proteins and 3 molecules of RNA (28S, 5.8S and 5S).

The protein resides in the cytoplasm. This Brugia malayi (Filarial nematode worm) protein is Small ribosomal subunit protein eS1.